The sequence spans 382 residues: Dual-specificity RNA methyltransferase RlmN (382 aa).

Catalysis depends on glutamate 96, which acts as the Proton acceptor. Residues glutamine 102–aspartate 342 form the Radical SAM core domain. An intrachain disulfide couples cysteine 109 to cysteine 345. 3 residues coordinate [4Fe-4S] cluster: cysteine 116, cysteine 120, and cysteine 123. Residues glycine 170–glutamate 171, serine 202, serine 224–histidine 226, and asparagine 302 each bind S-adenosyl-L-methionine. The S-methylcysteine intermediate role is filled by cysteine 345.

Belongs to the radical SAM superfamily. RlmN family. It depends on [4Fe-4S] cluster as a cofactor.

It is found in the cytoplasm. The catalysed reaction is adenosine(2503) in 23S rRNA + 2 reduced [2Fe-2S]-[ferredoxin] + 2 S-adenosyl-L-methionine = 2-methyladenosine(2503) in 23S rRNA + 5'-deoxyadenosine + L-methionine + 2 oxidized [2Fe-2S]-[ferredoxin] + S-adenosyl-L-homocysteine. It catalyses the reaction adenosine(37) in tRNA + 2 reduced [2Fe-2S]-[ferredoxin] + 2 S-adenosyl-L-methionine = 2-methyladenosine(37) in tRNA + 5'-deoxyadenosine + L-methionine + 2 oxidized [2Fe-2S]-[ferredoxin] + S-adenosyl-L-homocysteine. In terms of biological role, specifically methylates position 2 of adenine 2503 in 23S rRNA and position 2 of adenine 37 in tRNAs. m2A2503 modification seems to play a crucial role in the proofreading step occurring at the peptidyl transferase center and thus would serve to optimize ribosomal fidelity. The protein is Dual-specificity RNA methyltransferase RlmN of Pseudomonas savastanoi pv. phaseolicola (strain 1448A / Race 6) (Pseudomonas syringae pv. phaseolicola (strain 1448A / Race 6)).